The following is a 211-amino-acid chain: ATP phosphoribosyltransferase (211 aa).

It belongs to the ATP phosphoribosyltransferase family. Short subfamily. Heteromultimer composed of HisG and HisZ subunits.

The protein resides in the cytoplasm. The enzyme catalyses 1-(5-phospho-beta-D-ribosyl)-ATP + diphosphate = 5-phospho-alpha-D-ribose 1-diphosphate + ATP. The protein operates within amino-acid biosynthesis; L-histidine biosynthesis; L-histidine from 5-phospho-alpha-D-ribose 1-diphosphate: step 1/9. Functionally, catalyzes the condensation of ATP and 5-phosphoribose 1-diphosphate to form N'-(5'-phosphoribosyl)-ATP (PR-ATP). Has a crucial role in the pathway because the rate of histidine biosynthesis seems to be controlled primarily by regulation of HisG enzymatic activity. The chain is ATP phosphoribosyltransferase from Rippkaea orientalis (strain PCC 8801 / RF-1) (Cyanothece sp. (strain PCC 8801)).